Reading from the N-terminus, the 1092-residue chain is Elongation factor 3 (1092 aa).

V92 provides a ligand contact to ADP. HEAT repeat units lie at residues 95–133, 138–175, 177–214, 218–255, 257–293, 294–331, and 333–370; these read MVKTKILHGIATGLHNTKQPVAREGAITAIETLIKSPVS, PYMITFIPVLLERLSDKAKTVCLAADSALKALITRLTP, ATKQVLPLLLAGIEYSQKWQTKVGALELMQSLSKTAPR, TAVPDLVPPLSEVMHDTKAEAKNAGRQTMEAICELINN, DIEKFIPALIDTIANPEKVPDTVHLLGATTFVSEVLP, PTLAIMVPLLSRGLNERQTAIKRKAAVIIINMCKLVEK, and QIIAPFLPRLLPTLEKIQDDVADPECRQVCQNATKILT. E454 is a binding site for ADP. ABC transporter domains follow at residues 486–704 and 730–1044; these read EELC…YYEL and LKVQ…DKNK. N766, E973, N976, and H1002 together coordinate ADP. Disordered stretches follow at residues 1023–1044 and 1063–1092; these read TPTGHNWVSGQGSGPRLEDKNK and SKLSGKDLRKKRKEREARRKRGEEVSDDDE. Residues 1063–1075 show a composition bias toward basic residues; that stretch reads SKLSGKDLRKKRK. A compositionally biased stretch (basic and acidic residues) spans 1076-1086; sequence EREARRKRGEE.

The protein belongs to the ABC transporter superfamily. ABCF family. EF3 subfamily.

It is found in the cytoplasm. Its subcellular location is the cytosol. It carries out the reaction ATP + H2O = ADP + phosphate + H(+). It participates in protein biosynthesis; polypeptide chain elongation. In terms of biological role, ribosome-dependent ATPase that functions in cytoplasmic translation elongation. Required for the ATP-dependent release of deacylated tRNA from the ribosomal E-site during protein biosynthesis. Stimulates the eEF1A-dependent binding of aminoacyl-tRNA to the ribosomal A-site, which has reduced affinity for tRNA as long as the E-site is occupied. Assists translation termination by stimulating the release of nascent protein from the ribosome by release factors. The protein is Elongation factor 3 of Gonapodya prolifera (strain JEL478) (Monoblepharis prolifera).